A 412-amino-acid chain; its full sequence is Odorant receptor 47b (412 aa).

Residues Met1–Thr74 lie on the Cytoplasmic side of the membrane. A helical transmembrane segment spans residues Ile75–Asp95. Topologically, residues Leu96–Ala103 are extracellular. The chain crosses the membrane as a helical span at residues Leu104–Ser124. Topologically, residues Asp125–Ala169 are cytoplasmic. A helical membrane pass occupies residues Ala170–Phe190. The Extracellular segment spans residues Gln191 to Ser229. The chain crosses the membrane as a helical span at residues Thr230 to Asp250. Residues Met251 to Thr302 are Cytoplasmic-facing. The chain crosses the membrane as a helical span at residues Phe303–Met323. At Leu324 to Leu330 the chain is on the extracellular side. A helical transmembrane segment spans residues Ser331–Ala351. Topologically, residues Phe352–Phe389 are cytoplasmic. Residues Thr390 to Glu410 form a helical membrane-spanning segment. The Extracellular portion of the chain corresponds to Ser411 to Met412.

It belongs to the insect chemoreceptor superfamily. Heteromeric odorant receptor channel (TC 1.A.69) family. Or49a subfamily. Interacts with Orco. Complexes exist early in the endomembrane system in olfactory sensory neurons (OSNs), coupling these complexes to the conserved ciliary trafficking pathway. Expressed in olfactory sensory neurons in the antenna.

The protein resides in the cell membrane. Its function is as follows. Odorant receptor which mediates acceptance or avoidance behavior, depending on its substrates. The odorant receptor repertoire encodes a large collection of odor stimuli that vary widely in identity, intensity, and duration. May form a complex with Orco to form odorant-sensing units, providing sensitive and prolonged odorant signaling and calcium permeability. Plays an important role in sociosexual interactions since its enhances courtship in a pheromone-dependent manner. This Drosophila melanogaster (Fruit fly) protein is Odorant receptor 47b (Or47b).